The sequence spans 198 residues: MEHYISLFVKSVFIENMALSFFLGMCTFLAVSKKVSTAFGLGIAVIVVLGIAVPVNQLVYSFILKDSALVQGIDLSFLNFITFIGVIAALVQILEMVLDKYFPALYNALGIFLPLITVNCAIFGGVSFMVQRDYTFVESVVYGIGAGTGWMLAIVALAGITEKMKYADVPAGLRGLGITFITVGLMALGFMSFSGIQL.

6 helical membrane-spanning segments follow: residues 11-31 (SVFI…FLAV), 35-55 (VSTA…AVPV), 77-97 (FLNF…LEMV), 110-130 (GIFL…SFMV), 140-160 (VVYG…LAGI), and 176-196 (LGIT…FSGI).

This sequence belongs to the NqrDE/RnfAE family. As to quaternary structure, composed of six subunits; NqrA, NqrB, NqrC, NqrD, NqrE and NqrF.

Its subcellular location is the cell inner membrane. The catalysed reaction is a ubiquinone + n Na(+)(in) + NADH + H(+) = a ubiquinol + n Na(+)(out) + NAD(+). NQR complex catalyzes the reduction of ubiquinone-1 to ubiquinol by two successive reactions, coupled with the transport of Na(+) ions from the cytoplasm to the periplasm. NqrA to NqrE are probably involved in the second step, the conversion of ubisemiquinone to ubiquinol. This is Na(+)-translocating NADH-quinone reductase subunit E from Pasteurella multocida (strain Pm70).